A 201-amino-acid polypeptide reads, in one-letter code: Superoxide dismutase [Mn] (201 aa).

The Mn(2+) site is built by H27, H81, D163, and H167.

It belongs to the iron/manganese superoxide dismutase family. In terms of assembly, homodimer. The cofactor is Mn(2+).

The protein resides in the secreted. It carries out the reaction 2 superoxide + 2 H(+) = H2O2 + O2. Destroys superoxide anion radicals which are normally produced within the cells and which are toxic to biological systems. In Streptococcus pyogenes serotype M1, this protein is Superoxide dismutase [Mn] (sodA).